The primary structure comprises 187 residues: Glutathione-dependent formaldehyde-activating enzyme (187 aa).

The 148-residue stretch at 20-167 folds into the CENP-V/GFA domain; sequence FAGGTLVCKC…LKELGLEPYD (148 aa). Zn(2+) contacts are provided by Cys27, Cys29, Cys48, Cys50, Cys53, Cys95, and Cys98.

The protein belongs to the Gfa family. Requires Zn(2+) as cofactor.

It catalyses the reaction S-(hydroxymethyl)glutathione = glutathione + formaldehyde. It participates in one-carbon metabolism; formaldehyde degradation; formate from formaldehyde (glutathione route): step 1/3. Catalyzes the condensation of formaldehyde and glutathione to S-hydroxymethylglutathione. The chain is Glutathione-dependent formaldehyde-activating enzyme from Bradyrhizobium sp. (strain BTAi1 / ATCC BAA-1182).